The following is a 398-amino-acid chain: Lysophosphatidylserine lipase ABHD12 (398 aa).

The segment covering 1-15 (MRKRTEPVTLEHERC) has biased composition (basic and acidic residues). The tract at residues 1–24 (MRKRTEPVTLEHERCAASGSSSSG) is disordered. Over 1 to 74 (MRKRTEPVTL…RKSLWFRLRK (74 aa)) the chain is Cytoplasmic. Residues 75 to 95 (ILLCVLGFYIAIPFLVKLCPG) traverse the membrane as a helical segment. Residues 96-398 (IQAKLIFLNF…LGKSEPERQH (303 aa)) are Extracellular-facing. Asn-123 is a glycosylation site (N-linked (GlcNAc...) asparagine). The active-site Nucleophile is Ser-246. Catalysis depends on charge relay system residues Asp-333 and His-372.

Belongs to the serine esterase family.

The protein localises to the endoplasmic reticulum membrane. It carries out the reaction 1-(9Z-octadecenoyl)-sn-glycero-3-phospho-L-serine + H2O = sn-glycero-3-phospho-L-serine + (9Z)-octadecenoate + H(+). The enzyme catalyses 1-(9Z-octadecenoyl)-sn-glycero-3-phospho-(1'-sn-glycerol) + H2O = sn-glycero-3-phospho-(1'-sn-glycerol) + (9Z)-octadecenoate + H(+). It catalyses the reaction 1-(9Z-octadecenoyl)-sn-glycero-3-phospho-(1D-myo-inositol) + H2O = sn-glycero-3-phospho-1D-myo-inositol + (9Z)-octadecenoate + H(+). The catalysed reaction is 1-(9Z-octadecenoyl)-sn-glycero-3-phosphoethanolamine + H2O = sn-glycero-3-phosphoethanolamine + (9Z)-octadecenoate + H(+). It carries out the reaction 1-(9Z-octadecenoyl)-sn-glycero-3-phosphocholine + H2O = 1-(9Z-octadecenoyl)-sn-glycerol + phosphocholine + H(+). The enzyme catalyses 2-(9Z-octadecenoyl)-glycerol + H2O = glycerol + (9Z)-octadecenoate + H(+). It catalyses the reaction 1-hexadecanoyl-sn-glycero-3-phospho-L-serine + H2O = sn-glycero-3-phospho-L-serine + hexadecanoate + H(+). The catalysed reaction is 2-(5Z,8Z,11Z,14Z-eicosatetraenoyl)-glycerol + H2O = glycerol + (5Z,8Z,11Z,14Z)-eicosatetraenoate + H(+). It carries out the reaction Hydrolyzes glycerol monoesters of long-chain fatty acids.. The enzyme catalyses 1-decanoylglycerol + H2O = decanoate + glycerol + H(+). It catalyses the reaction 1-dodecanoylglycerol + H2O = dodecanoate + glycerol + H(+). The catalysed reaction is 1-tetradecanoylglycerol + H2O = tetradecanoate + glycerol + H(+). It carries out the reaction 2-hexadecanoylglycerol + H2O = glycerol + hexadecanoate + H(+). The enzyme catalyses 1-(9Z-octadecenoyl)-glycerol + H2O = glycerol + (9Z)-octadecenoate + H(+). It catalyses the reaction 2-(9Z,12Z-octadecadienoyl)-glycerol + H2O = (9Z,12Z)-octadecadienoate + glycerol + H(+). The catalysed reaction is 1-(5Z,8Z,11Z,14Z-eicosatetraenoyl)-glycerol + H2O = glycerol + (5Z,8Z,11Z,14Z)-eicosatetraenoate + H(+). It carries out the reaction 1-(9Z,12Z-octadecadienoyl)-glycerol + H2O = (9Z,12Z)-octadecadienoate + glycerol + H(+). The enzyme catalyses 1-hexadecanoylglycerol + H2O = glycerol + hexadecanoate + H(+). It catalyses the reaction 1-octadecanoylglycerol + H2O = octadecanoate + glycerol + H(+). The catalysed reaction is 1-octadecanoyl-2-(9,10-epoxyoctadecanoyl)-sn-glycero-3-phospho-L-serine + H2O = 9,10-epoxyoctadecanoate + 1-octadecanoyl-sn-glycero-3-phosphoserine + H(+). It carries out the reaction 1-octadecanoyl-2-(10-hydroxyoctadecanoyl)-sn-glycero-3-phospho-L-serine + H2O = 1-octadecanoyl-sn-glycero-3-phosphoserine + 10-hydroxyoctadecanoate + H(+). The enzyme catalyses 1-hexadecanoyl-2-(10-hydroxyoctadecanoyl)-sn-glycero-3-phospho-L-serine + H2O = 10-hydroxyoctadecanoate + 1-hexadecanoyl-sn-glycero-3-phospho-L-serine + H(+). Its function is as follows. Lysophosphatidylserine (LPS) lipase that mediates the hydrolysis of lysophosphatidylserine, a class of signaling lipids that regulates immunological and neurological processes. Represents a major lysophosphatidylserine lipase in the brain, thereby playing a key role in the central nervous system. Also able to hydrolyze oxidized phosphatidylserine; oxidized phosphatidylserine is produced in response to severe inflammatory stress and constitutes a proapoptotic 'eat me' signal. Also has monoacylglycerol (MAG) lipase activity: hydrolyzes 2-arachidonoylglycerol (2-AG), thereby acting as a regulator of endocannabinoid signaling pathways. Has a strong preference for very-long-chain lipid substrates; substrate specificity is likely due to improved catalysis and not improved substrate binding. This is Lysophosphatidylserine lipase ABHD12 from Rattus norvegicus (Rat).